A 475-amino-acid polypeptide reads, in one-letter code: tRNA-2-methylthio-N(6)-dimethylallyladenosine synthase (475 aa).

The region spanning 3 to 120 is the MTTase N-terminal domain; it reads KKLHIKTWGC…LPEMIDQIKD (118 aa). [4Fe-4S] cluster contacts are provided by Cys-12, Cys-49, Cys-83, Cys-157, Cys-161, and Cys-164. In terms of domain architecture, Radical SAM core spans 143 to 375; sequence RAEGPSAFVS…QDRITQQAMR (233 aa). Residues 378-441 enclose the TRAM domain; sequence RQMVGTVQRI…TNSLRGVFIR (64 aa).

It belongs to the methylthiotransferase family. MiaB subfamily. As to quaternary structure, monomer. [4Fe-4S] cluster is required as a cofactor.

It localises to the cytoplasm. The enzyme catalyses N(6)-dimethylallyladenosine(37) in tRNA + (sulfur carrier)-SH + AH2 + 2 S-adenosyl-L-methionine = 2-methylsulfanyl-N(6)-dimethylallyladenosine(37) in tRNA + (sulfur carrier)-H + 5'-deoxyadenosine + L-methionine + A + S-adenosyl-L-homocysteine + 2 H(+). Catalyzes the methylthiolation of N6-(dimethylallyl)adenosine (i(6)A), leading to the formation of 2-methylthio-N6-(dimethylallyl)adenosine (ms(2)i(6)A) at position 37 in tRNAs that read codons beginning with uridine. This is tRNA-2-methylthio-N(6)-dimethylallyladenosine synthase from Shewanella pealeana (strain ATCC 700345 / ANG-SQ1).